The primary structure comprises 343 residues: N-acetyl-gamma-glutamyl-phosphate reductase (343 aa).

C148 is an active-site residue.

Belongs to the NAGSA dehydrogenase family. Type 1 subfamily.

Its subcellular location is the cytoplasm. The catalysed reaction is N-acetyl-L-glutamate 5-semialdehyde + phosphate + NADP(+) = N-acetyl-L-glutamyl 5-phosphate + NADPH + H(+). The protein operates within amino-acid biosynthesis; L-arginine biosynthesis; N(2)-acetyl-L-ornithine from L-glutamate: step 3/4. Functionally, catalyzes the NADPH-dependent reduction of N-acetyl-5-glutamyl phosphate to yield N-acetyl-L-glutamate 5-semialdehyde. This is N-acetyl-gamma-glutamyl-phosphate reductase from Caldicellulosiruptor bescii (strain ATCC BAA-1888 / DSM 6725 / KCTC 15123 / Z-1320) (Anaerocellum thermophilum).